The sequence spans 702 residues: SAGA complex subunit NGG1 (702 aa).

Positions 1–10 (MPRHGRRGKL) are enriched in basic residues. 2 disordered regions span residues 1–29 (MPRH…PSKL) and 90–224 (LRKI…VKNP). 2 stretches are compositionally biased toward basic and acidic residues: residues 11–22 (PKGEKLPKKEGG) and 90–108 (LRKI…EKQE). Positions 109 to 125 (TSNADGQHESSTATEET) are enriched in polar residues. Ser-134 carries the phosphoserine modification. Positions 162–219 (MAKEEINEDKDLQVHRDQPREKRPFDSETENRATENENTQRPDNKKQKIDVDKMENDP) are enriched in basic and acidic residues. A Phosphoserine modification is found at Ser-407. Thr-464 is modified (phosphothreonine). Residues 606–618 (KRIRVPKKRKKHH) carry the Nuclear localization signal motif. Disordered regions lie at residues 611–636 (PKKR…IAQQ) and 672–702 (NESV…VELN). Polar residues predominate over residues 620–636 (AASNNVNTGTTSQIAQQ). Residues 680–689 (DQEEDEDEAD) show a composition bias toward acidic residues.

Belongs to the NGG1 family. In terms of assembly, component of the 1.8 MDa SAGA (Spt-Ada-Gcn5 acetyltransferase) complex, which is composed of 19 subunits TRA1, SPT7, TAF5, NGG1/ADA3, SGF73, SPT20/ADA5, SPT8, TAF12, TAF6, HFI1/ADA1, UBP8, GCN5, ADA2, SPT3, SGF29, TAF10, TAF9, SGF11 and SUS1. The SAGA complex is composed of 4 modules, namely the HAT (histone acetyltransferase) module (GCN5, ADA2, NGG1/ADA3 and SGF29), the DUB (deubiquitinating) module (UBP8, SGF11, SGF73 and SUS1), the core or TAF (TBP-associated factor) module (TAF5, TAF6, TAF9, TAF10 and TAF12), and the Tra1 or SPT (Suppressor of Ty) module (TRA1, HFI1/ADA1, SPT3, SPT7, SPT8 and SPT20/ADA5). The Tra1/SPT module binds activators, the core module recruits TBP (TATA-binding protein), the HAT module contains the histone H3 acetyltransferase GCN5, and the DUB module comprises the histone H2B deubiquitinase UBP8. Also identified in an altered form of SAGA, named SALSA (SAGA altered, Spt8 absent) or SLIK (SAGA-like) complex, which contains a C-terminal truncated form of SPT7 and is missing SPT8. However, it has been shown that the SAGA and SAGA-like SALSA/SLIK transcriptional coactivators are structurally and biochemically equivalent. Component of the 0.8 MDa ADA complex, a HAT complex distinct from SAGA, which at least consists of ADA2, NGG1/ADA3, AHC1, AHC2, SGF29 and GCN5. Identified in an Ada.spt complex with SPT7 and TRA1. Component of an ADA/GCN5 complex that consists of HFI1/ADA1, ADA2, NGG1/ADA3, SPT20/ADA5 and GCN5 and probably is a subcomplex of SAGA.

It localises to the nucleus. Its function is as follows. Component of the transcription coactivator SAGA complex. SAGA acts as a general cofactor required for essentially all RNA polymerase II transcription. At the promoters, SAGA is required for transcription pre-initiation complex (PIC) recruitment. It influences RNA polymerase II transcriptional activity through different activities such as TBP interaction (via core/TAF module) and promoter selectivity, interaction with transcription activators (via Tra1/SPT module), and chromatin modification through histone acetylation (via HAT module) and deubiquitination (via DUB module). SAGA preferentially acetylates histones H3 (to form H3K9ac, H3K14ac, H3K18ac and H3K23ac) and H2B and deubiquitinates histone H2B. SAGA interacts with DNA via upstream activating sequences (UASs). Also identified in a modified version of SAGA named SALSA or SLIK. The cleavage of SPT7 and the absence of the SPT8 subunit in SLIK neither drive any major conformational differences in its structure compared with SAGA, nor significantly affect HAT, DUB, or DNA-binding activities. Component of the ADA histone acetyltransferase complex, which preferentially acetylates nucleosomal histones H3 (to form H3K14ac and H3K18ac) and H2B. May be involved in response to DNA damage by genotoxic agents. In Saccharomyces cerevisiae (strain ATCC 204508 / S288c) (Baker's yeast), this protein is SAGA complex subunit NGG1 (NGG1).